The chain runs to 1312 residues: Probable histone-lysine N-methyltransferase lin-59 (1312 aa).

Polar residues-rich tracts occupy residues 1-11 and 25-36; these read MHGAGEQQQRY and STSSHQYQQQGA. 5 disordered regions span residues 1–41, 54–81, 154–223, 312–435, and 524–556; these read MHGA…QMHQ, TTTS…RQQG, QPSG…KPVD, EESK…PPPV, and KDNI…EPSE. Residues 54 to 68 are compositionally biased toward low complexity; sequence TTTSAAASTSSSGGS. Gly residues predominate over residues 69–78; the sequence is NSSGGSGGHR. Residues 160 to 176 show a composition bias toward low complexity; that stretch reads PMSSNAPATTSSATPDS. Residues 200–210 are compositionally biased toward acidic residues; the sequence is DHDDEEDDDGP. The span at 312-321 shows a compositional bias: basic and acidic residues; it reads EESKKKKDME. Residues 344-367 show a composition bias toward polar residues; sequence ATRSTNSPDVTTSNLPEEPSTSTM. Residues 371 to 382 show a composition bias toward basic and acidic residues; the sequence is KENEDVEKVEGK. Residues 383 to 394 show a composition bias toward basic residues; that stretch reads RRGRKPKKRRGF. Composition is skewed to basic and acidic residues over residues 395 to 419 and 524 to 535; these read HKES…DHLP and KDNIKKEVKEES. In terms of domain architecture, AWS spans 590–635; it reads APSLTCGCTKGACTSDMDCLNRALRVQCSSDCSVPYCSNRRFWKED. In terms of domain architecture, SET spans 638 to 750; it reads NKLCVSNGPR…PNAEITVDKS (113 aa). The segment at 913–934 is disordered; the sequence is DNAPRARALSTSCPSPVPSKRG. A PHD-type zinc finger spans residues 967-1027; that stretch reads AVRCICGALD…EYICDFCTNK (61 aa). In terms of domain architecture, BAH spans 1100 to 1223; that stretch reads NKYRFPKAAT…KTQRVFEKVP (124 aa). Residues 1248–1295 form a disordered region; the sequence is RDFRPYDPSNPSPKPPKTSSIPSTSSIDPPQSSSDGLPEVDTKKLSKR. The span at 1264–1281 shows a compositional bias: low complexity; sequence KTSSIPSTSSIDPPQSSS.

It belongs to the class V-like SAM-binding methyltransferase superfamily. Histone-lysine methyltransferase family. SET2 subfamily. In terms of tissue distribution, widely expressed throughout embryonic development and into adulthood.

The protein localises to the nucleus. The enzyme catalyses L-lysyl-[histone] + S-adenosyl-L-methionine = N(6)-methyl-L-lysyl-[histone] + S-adenosyl-L-homocysteine + H(+). Functionally, probable histone methyltransferase. Essential protein required to maintain expression of homeotic genes egl-5 and mab-5. May play an analogous role to the trithorax Group (trxG) proteins. TrxG proteins form multiprotein complexes that are required to maintain the transcriptionally active state of homeotic genes throughout development. May act via a modification of chromatin. This Caenorhabditis elegans protein is Probable histone-lysine N-methyltransferase lin-59 (lin-59).